The sequence spans 285 residues: Protoheme IX farnesyltransferase (285 aa).

The next 9 helical transmembrane spans lie at 13 to 33 (LGKLGVVSLLDLAAVAGAFLA), 40 to 60 (LLPIIPMFIGGTLASMGAMII), 89 to 109 (EAIIVGSLLAILGTALGFIDN), 110 to 130 (ILTAFFIALGVVIYIFVYTIL), 137 to 157 (LNIVIGGFAGSAAAWAGYTSL), 165 to 185 (GFLLGFLIFMWTPGHFWSLAL), 194 to 214 (AHYPMLPAVVGITTSARAIAI), 218 to 238 (LMIPIVLLLGYYINLIALIAF), and 265 to 285 (FIFSNIYLMLILLIMIIVKLI).

It belongs to the UbiA prenyltransferase family. Protoheme IX farnesyltransferase subfamily.

The protein localises to the cell membrane. It carries out the reaction heme b + (2E,6E)-farnesyl diphosphate + H2O = Fe(II)-heme o + diphosphate. Its pathway is porphyrin-containing compound metabolism; heme O biosynthesis; heme O from protoheme: step 1/1. In terms of biological role, converts heme B (protoheme IX) to heme O by substitution of the vinyl group on carbon 2 of heme B porphyrin ring with a hydroxyethyl farnesyl side group. In Saccharolobus islandicus (strain Y.G.57.14 / Yellowstone #1) (Sulfolobus islandicus), this protein is Protoheme IX farnesyltransferase.